The sequence spans 933 residues: Protein translocase subunit SecA (933 aa).

ATP contacts are provided by residues Gln90, 108-112 (GEGKT), and Asp504. The interval 539–570 (GMGSNNRRPQGFGQDSKKKKWQPSADIFPTDL) is disordered.

The protein belongs to the SecA family. Monomer and homodimer. Part of the essential Sec protein translocation apparatus which comprises SecA, SecYEG and auxiliary proteins SecDF. Other proteins may also be involved.

It is found in the cell inner membrane. Its subcellular location is the cellular thylakoid membrane. The protein localises to the cytoplasm. It carries out the reaction ATP + H2O + cellular proteinSide 1 = ADP + phosphate + cellular proteinSide 2.. Part of the Sec protein translocase complex. Interacts with the SecYEG preprotein conducting channel. Has a central role in coupling the hydrolysis of ATP to the transfer of proteins into and across the cell membrane, serving as an ATP-driven molecular motor driving the stepwise translocation of polypeptide chains across the membrane. Its function is as follows. Probably participates in protein translocation into and across both the cytoplasmic and thylakoid membranes in cyanobacterial cells. The chain is Protein translocase subunit SecA from Crocosphaera subtropica (strain ATCC 51142 / BH68) (Cyanothece sp. (strain ATCC 51142)).